Here is a 472-residue protein sequence, read N- to C-terminus: Protein nucleotidyltransferase YdiU (472 aa).

ATP is bound by residues G86, G88, R89, K109, D121, G122, R172, and R179. The active-site Proton acceptor is the D244. Residues N245 and D254 each contribute to the Mg(2+) site. An ATP-binding site is contributed by D254.

The protein belongs to the SELO family. Requires Mg(2+) as cofactor. It depends on Mn(2+) as a cofactor.

The enzyme catalyses L-seryl-[protein] + ATP = 3-O-(5'-adenylyl)-L-seryl-[protein] + diphosphate. It catalyses the reaction L-threonyl-[protein] + ATP = 3-O-(5'-adenylyl)-L-threonyl-[protein] + diphosphate. It carries out the reaction L-tyrosyl-[protein] + ATP = O-(5'-adenylyl)-L-tyrosyl-[protein] + diphosphate. The catalysed reaction is L-histidyl-[protein] + UTP = N(tele)-(5'-uridylyl)-L-histidyl-[protein] + diphosphate. The enzyme catalyses L-seryl-[protein] + UTP = O-(5'-uridylyl)-L-seryl-[protein] + diphosphate. It catalyses the reaction L-tyrosyl-[protein] + UTP = O-(5'-uridylyl)-L-tyrosyl-[protein] + diphosphate. Functionally, nucleotidyltransferase involved in the post-translational modification of proteins. It can catalyze the addition of adenosine monophosphate (AMP) or uridine monophosphate (UMP) to a protein, resulting in modifications known as AMPylation and UMPylation. The chain is Protein nucleotidyltransferase YdiU from Ruegeria sp. (strain TM1040) (Silicibacter sp.).